The sequence spans 917 residues: Hexokinase-2 (917 aa).

At methionine 1 the chain carries N-acetylmethionine. The tract at residues 1–16 is mitochondrial-binding peptide (MBP); sequence MIASHLLAYFFTELNH. 2 consecutive Hexokinase domains span residues 16 to 458 and 464 to 906; these read HDQV…MVTA and AYQH…LITA. Residues arginine 30 and 84–89 each bind ATP; that span reads DLGGTN. Residues 73 to 207 are hexokinase small subdomain 1; it reads DGTEHGEFLA…DFDIDIVAMV (135 aa). A D-glucose 6-phosphate-binding site is contributed by 84-88; it reads DLGGT. D-glucose is bound by residues 155–156, 172–173, 208–209, asparagine 235, glutamate 260, and 291–294; these read SF, TK, ND, and QLFE. The segment at 208 to 447 is hexokinase large subdomain 1; sequence NDTVATMMTC…CDIRFLCSED (240 aa). Position 209 (aspartate 209) interacts with D-glucose 6-phosphate. 413-415 is a D-glucose 6-phosphate binding site; it reads DGS. Residue 425–426 participates in ATP binding; that stretch reads KR. D-glucose 6-phosphate-binding positions include serine 449 and 532 to 536; that span reads DLGGT. The tract at residues 521–655 is hexokinase small subdomain 2; that stretch reads DGTEKGDFLA…EFDLDVVAVV (135 aa). 532 to 537 is a binding site for ATP; that stretch reads DLGGTN. Residues 603–604, 620–621, and 656–657 each bind D-glucose; these read SF, TK, and ND. Residues 656–895 form a hexokinase large subdomain 2 region; it reads NDTVGTMMTC…CDVSFLESED (240 aa). 2 residues coordinate D-glucose 6-phosphate: aspartate 657 and threonine 680. Threonine 680 contacts ATP. D-glucose contacts are provided by residues 682 to 683, glutamate 708, and 739 to 742; these read SN and QRFE. Residues 747–748, 784–788, and 863–867 each bind ATP; these read GM, TKFLS, and TLYKL. D-glucose 6-phosphate is bound by residues 861–863 and serine 897; that span reads DGT.

Belongs to the hexokinase family. As to quaternary structure, monomer. Interacts with TIGAR; the interaction increases hexokinase activity in a hypoxia- and HIF1A-dependent manner.

The protein resides in the mitochondrion outer membrane. It localises to the cytoplasm. It is found in the cytosol. It catalyses the reaction a D-hexose + ATP = a D-hexose 6-phosphate + ADP + H(+). It carries out the reaction D-fructose + ATP = D-fructose 6-phosphate + ADP + H(+). The catalysed reaction is D-glucose + ATP = D-glucose 6-phosphate + ADP + H(+). Its pathway is carbohydrate metabolism; hexose metabolism. It participates in carbohydrate degradation; glycolysis; D-glyceraldehyde 3-phosphate and glycerone phosphate from D-glucose: step 1/4. Hexokinase activity is specifically inhibited by 2,6-disubstituted glucosamines. Catalyzes the phosphorylation of hexose, such as D-glucose and D-fructose, to hexose 6-phosphate (D-glucose 6-phosphate and D-fructose 6-phosphate, respectively). Mediates the initial step of glycolysis by catalyzing phosphorylation of D-glucose to D-glucose 6-phosphate. Plays a key role in maintaining the integrity of the outer mitochondrial membrane by preventing the release of apoptogenic molecules from the intermembrane space and subsequent apoptosis. This Equus zebra (Mountain zebra) protein is Hexokinase-2.